A 264-amino-acid chain; its full sequence is tRNA pseudouridine synthase A (264 aa).

Asp-51 serves as the catalytic Nucleophile. Tyr-109 provides a ligand contact to substrate.

It belongs to the tRNA pseudouridine synthase TruA family. As to quaternary structure, homodimer.

It carries out the reaction uridine(38/39/40) in tRNA = pseudouridine(38/39/40) in tRNA. Functionally, formation of pseudouridine at positions 38, 39 and 40 in the anticodon stem and loop of transfer RNAs. The protein is tRNA pseudouridine synthase A of Vibrio vulnificus (strain CMCP6).